A 140-amino-acid polypeptide reads, in one-letter code: MLYHGVDLVEVRRIRQAVMRYGQRFLARVYTAAERADCEIAPQVMRYEALAARWAAKEACAKALGIGLRGLGAFTVDYPRAGLHDIEVVRDAAGRPTLHLSGVAAQTANALQIRALAVSLSHTDELAIASVVAWVDLSGV.

Positions 7 and 58 each coordinate Mg(2+).

It belongs to the P-Pant transferase superfamily. AcpS family. The cofactor is Mg(2+).

It localises to the cytoplasm. It catalyses the reaction apo-[ACP] + CoA = holo-[ACP] + adenosine 3',5'-bisphosphate + H(+). In terms of biological role, transfers the 4'-phosphopantetheine moiety from coenzyme A to a Ser of acyl-carrier-protein. In Chloroflexus aggregans (strain MD-66 / DSM 9485), this protein is Holo-[acyl-carrier-protein] synthase.